Here is a 292-residue protein sequence, read N- to C-terminus: Tetratricopeptide repeat protein 1 (292 aa).

2 stretches are compositionally biased toward basic and acidic residues: residues 1–12 (MEEKSEDCKVPE) and 47–64 (KAAE…ECFH). The interval 1 to 125 (MEEKSEDCKV…SAKLKEEGNE (125 aa)) is disordered. The span at 88–98 (SSSELDEEYLI) shows a compositional bias: acidic residues. Serine 90 carries the post-translational modification Phosphoserine. The segment covering 99–125 (ELEKNMPEEEKQKRREESAKLKEEGNE) has biased composition (basic and acidic residues). 3 TPR repeats span residues 116–149 (SAKL…CPAC), 155–188 (SVLF…NPTY), and 189–222 (IRAI…DPSV).

As to quaternary structure, interacts with the GAP domain of NF1. Interacts (via TPR repeats) with HSP90AA1 and HSPA8.

The sequence is that of Tetratricopeptide repeat protein 1 (Ttc1) from Mus musculus (Mouse).